An 874-amino-acid polypeptide reads, in one-letter code: Mitochondrial escape protein 2 (874 aa).

The transit peptide at 1–55 directs the protein to the mitochondrion; that stretch reads MIRTFATIANRGPGIRLATLAASRNLGYSSGGRISSVRIEKLRFSPFRSSTSLRY. The Mitochondrial matrix segment spans residues 56–313; sequence TSDIQHVMQE…ITDFIGNHQR (258 aa). In terms of domain architecture, RRM spans 224 to 297; it reads VKLSVKFEGE…NTVVHIQYLP (74 aa). The chain crosses the membrane as a helical span at residues 314–334; the sequence is IAIPIILALLATAAVFIFDPI. Topologically, residues 335–874 are mitochondrial intermembrane; it reads REWFIMQNVS…GLSSKKSSWF (540 aa). A disordered region spans residues 547 to 566; that stretch reads RRRQQGDSTSEDILSEDEYL. Residues 555 to 565 show a composition bias toward acidic residues; the sequence is TSEDILSEDEY.

It belongs to the YME2 family.

The protein localises to the mitochondrion inner membrane. Plays a role in maintaining the mitochondrial genome and in controlling the mtDNA escape. Involved in the regulation of mtDNA nucleotide structure and number. May have a dispensable role in early maturation of pre-rRNA. In Meyerozyma guilliermondii (strain ATCC 6260 / CBS 566 / DSM 6381 / JCM 1539 / NBRC 10279 / NRRL Y-324) (Yeast), this protein is Mitochondrial escape protein 2 (YME2).